Here is a 391-residue protein sequence, read N- to C-terminus: Heme A synthase (391 aa).

The next 8 helical transmembrane spans lie at 37-57, 121-141, 152-172, 186-206, 229-249, 298-318, 332-352, and 354-374; these read IRLW…VGGL, RQLG…FLAA, LLAL…MVAS, LATH…QALL, TTVL…VAGI, FLHR…WIFG, LLAM…LSAA, and WQVA…ILHA. Residue H300 coordinates heme. H360 is a heme binding site.

The protein belongs to the COX15/CtaA family. Type 2 subfamily. Interacts with CtaB. Heme b is required as a cofactor.

It is found in the cell membrane. It carries out the reaction Fe(II)-heme o + 2 A + H2O = Fe(II)-heme a + 2 AH2. The protein operates within porphyrin-containing compound metabolism; heme A biosynthesis; heme A from heme O: step 1/1. Its function is as follows. Catalyzes the conversion of heme O to heme A by two successive hydroxylations of the methyl group at C8. The first hydroxylation forms heme I, the second hydroxylation results in an unstable dihydroxymethyl group, which spontaneously dehydrates, resulting in the formyl group of heme A. The polypeptide is Heme A synthase (Cereibacter sphaeroides (strain ATCC 17029 / ATH 2.4.9) (Rhodobacter sphaeroides)).